A 182-amino-acid polypeptide reads, in one-letter code: Meiotically up-regulated gene 82 protein (182 aa).

Residues 161–182 (EKRLSEKKYKQKKKTQRRITMD) form a disordered region. Residues 169–182 (YKQKKKTQRRITMD) show a composition bias toward basic residues.

The protein belongs to the prokaryotic/mitochondrial release factor family.

The protein resides in the mitochondrion. Functionally, has a role in meiosis. This is Meiotically up-regulated gene 82 protein (mug82) from Schizosaccharomyces pombe (strain 972 / ATCC 24843) (Fission yeast).